The primary structure comprises 336 residues: Isopentenyl-diphosphate delta-isomerase (336 aa).

Residue 5–6 participates in substrate binding; it reads RK. Residues 60–62, S90, and N117 contribute to the FMN site; that span reads AMT. Residue Q147 participates in substrate binding. E148 provides a ligand contact to Mg(2+). Residues K179, S204, T209, 253–255, and 274–275 contribute to the FMN site; these read GVR and SR.

The protein belongs to the IPP isomerase type 2 family. In terms of assembly, homooctamer. Dimer of tetramers. FMN serves as cofactor. NADPH is required as a cofactor. Requires Mg(2+) as cofactor.

The protein resides in the cytoplasm. It carries out the reaction isopentenyl diphosphate = dimethylallyl diphosphate. Its function is as follows. Involved in the biosynthesis of isoprenoids. Catalyzes the 1,3-allylic rearrangement of the homoallylic substrate isopentenyl (IPP) to its allylic isomer, dimethylallyl diphosphate (DMAPP). This is Isopentenyl-diphosphate delta-isomerase from Streptococcus pneumoniae serotype 4 (strain ATCC BAA-334 / TIGR4).